The chain runs to 424 residues: MRPLFVRRARQLVTLAGSSAAPLVKEKMSDLGIIENGSVWIENGTIVAVGPDDELVRRFADRLAEAEVIDAKGKTVTPGLIDPHTHLVYAGSREHEWTMRLHGATYMEIMNAGGGIHATTKATREASEEALYEESKRRLDQFLLHGVTTVEAKSGYGLSLEHEIKQLEIAKRLHDTHPVDIVSTFLGAHAVPPEWKHDPDEYVRLVIDEMIPEVSRRGLAEFNDVFCERGVFTPDQARRMLEAGKASGLTPKIHADEIEPYGGAELAAEVGAISADHLLRASDEGIRRMADGGVIGVLLPGTAFFLMTKAADARRLIDAGVPVALATDCNPGSSPTVSLPLVMSLACLHMGMTPAEAMAAATINAAHAIGRAHLVGSLEPGKKADLVIFNVPNYMQIMYYYGVNHAETVIKGGKVVVNDGKVYI.

Residues histidine 84 and histidine 86 each contribute to the Fe(3+) site. Residues histidine 84 and histidine 86 each contribute to the Zn(2+) site. Arginine 93, tyrosine 156, and histidine 189 together coordinate 4-imidazolone-5-propanoate. Tyrosine 156 contacts N-formimidoyl-L-glutamate. Fe(3+) is bound at residue histidine 254. Histidine 254 contributes to the Zn(2+) binding site. 4-imidazolone-5-propanoate is bound at residue glutamate 257. Aspartate 328 is a binding site for Fe(3+). Residue aspartate 328 participates in Zn(2+) binding. Residues asparagine 330 and glycine 332 each coordinate N-formimidoyl-L-glutamate. Serine 333 is a binding site for 4-imidazolone-5-propanoate.

The protein belongs to the metallo-dependent hydrolases superfamily. HutI family. Zn(2+) serves as cofactor. Requires Fe(3+) as cofactor.

The protein localises to the cytoplasm. It catalyses the reaction 4-imidazolone-5-propanoate + H2O = N-formimidoyl-L-glutamate. The protein operates within amino-acid degradation; L-histidine degradation into L-glutamate; N-formimidoyl-L-glutamate from L-histidine: step 3/3. In terms of biological role, catalyzes the hydrolytic cleavage of the carbon-nitrogen bond in imidazolone-5-propanoate to yield N-formimidoyl-L-glutamate. It is the third step in the universal histidine degradation pathway. The polypeptide is Imidazolonepropionase (Geobacillus kaustophilus (strain HTA426)).